We begin with the raw amino-acid sequence, 445 residues long: Zinc finger protein SHOOT GRAVITROPISM 5 (445 aa).

A compositionally biased stretch (low complexity) spans 22-31 (SSSDPFLSSS). The disordered stretch occupies residues 22-59 (SSSDPFLSSSENGVTTTNTSTQKRKRRPAGTPDPDAEV). The span at 32-42 (ENGVTTTNTST) shows a compositional bias: polar residues. 3 C2H2-type zinc fingers span residues 73 to 95 (YICE…RRRH), 115 to 145 (YVCP…RRKH), and 151 to 178 (WVCE…TRGH). 8 residues coordinate Zn(2+): C153, C156, H169, C173, C180, C182, H195, and C199. The segment at 178 to 201 (HSCDCGRVFSRVESFIEHQDNCSA) adopts a CCHC-type 2; atypical zinc-finger fold. Residues 188 to 200 (RVESFIEHQDNCS) are SHR-binding. Disordered stretches follow at residues 203-253 (RVHR…LEGR) and 281-314 (SSNQ…LNLS). A compositionally biased stretch (polar residues) spans 214-248 (TAVTVPACSSRTASTVSTPSSETNYGGTVAVTTPQ). Residues 281-293 (SSNQNPNQENQQQ) are compositionally biased toward low complexity. Residues 340–397 (MKIAMKEKAYAEEAKREAKRQREIAENEFANAKKIRQKAQAELERAKFLKEQSMKKIS) adopt a coiled-coil conformation.

As to expression, mainly expressed in the endodermis, the gravity-sensing tissue in inflorescence stems. Mostly present in stems and flowers, and, to a lower extent, in seedlings, hypocotyls, roots and the shoot apical meristem (SAM).

The protein resides in the nucleus. In terms of biological role, transcription factor involved in inflorescence stems gravitropism, probably by regulating starch accumulation in amyloplasts of graviperceptive cells. Required for stem circumnutation movements. Regulates lateral organ morphogenesis and gravitropic responses. Acts cooperatively with IDD16 to control silique and branche orientation. Involved in the establishment of auxin gradients through the regulation of auxin biosynthesis and transport. This chain is Zinc finger protein SHOOT GRAVITROPISM 5, found in Arabidopsis thaliana (Mouse-ear cress).